A 611-amino-acid chain; its full sequence is Zinc metalloproteinase-disintegrin-like ohanin (611 aa).

The signal sequence occupies residues 1 to 20 (MIQVLLVTICLVVFPYQGSS). Positions 21-187 (IILESGKVND…WESDEPIEKI (167 aa)) are excised as a propeptide. The 196-residue stretch at 198–393 (KYLELYIVAD…DTPQCLINKP (196 aa)) folds into the Peptidase M12B domain. Asn-217 and Asn-260 each carry an N-linked (GlcNAc...) asparagine glycan. 3 cysteine pairs are disulfide-bonded: Cys-307/Cys-388, Cys-347/Cys-372, and Cys-349/Cys-354. A Zn(2+)-binding site is contributed by His-332. Residue Glu-333 is part of the active site. Residues His-336 and His-342 each coordinate Zn(2+). N-linked (GlcNAc...) asparagine glycosylation occurs at Asn-395. One can recognise a Disintegrin domain in the interval 401–487 (NAVCGNYVEE…ECPMDRFHKN (87 aa)). Intrachain disulfides connect Cys-404-Cys-433, Cys-415-Cys-428, Cys-417-Cys-423, Cys-427-Cys-450, Cys-441-Cys-447, Cys-446-Cys-472, Cys-459-Cys-479, Cys-466-Cys-498, Cys-491-Cys-503, Cys-510-Cys-560, Cys-525-Cys-578, Cys-538-Cys-548, Cys-555-Cys-603, and Cys-597-Cys-608. The short motif at 465–467 (ECD) is the D/ECD-tripeptide element. A glycan (N-linked (GlcNAc...) asparagine) is linked at Asn-528.

The protein belongs to the venom metalloproteinase (M12B) family. P-III subfamily. P-IIIa sub-subfamily. Monomer. Zn(2+) serves as cofactor. In terms of tissue distribution, expressed by the venom gland.

It localises to the secreted. Its activity is regulated as follows. Inhibited by EDTA, but not by PMSF. Functionally, snake venom zinc metalloproteinase that has hemorrhagic activity. Inhibits ADP-, TMVA- and stejnulxin-induced platelet aggregation in a dose-dependent manner (on washed platelet, but not on platelet rich plasm). Also specifically degrades alpha-chain of fibrinogen (FGA). This is Zinc metalloproteinase-disintegrin-like ohanin from Ophiophagus hannah (King cobra).